The following is a 114-amino-acid chain: Large ribosomal subunit protein uL22 (114 aa).

The protein belongs to the universal ribosomal protein uL22 family. Part of the 50S ribosomal subunit.

Its function is as follows. This protein binds specifically to 23S rRNA; its binding is stimulated by other ribosomal proteins, e.g. L4, L17, and L20. It is important during the early stages of 50S assembly. It makes multiple contacts with different domains of the 23S rRNA in the assembled 50S subunit and ribosome. In terms of biological role, the globular domain of the protein is located near the polypeptide exit tunnel on the outside of the subunit, while an extended beta-hairpin is found that lines the wall of the exit tunnel in the center of the 70S ribosome. The protein is Large ribosomal subunit protein uL22 of Streptococcus agalactiae serotype Ia (strain ATCC 27591 / A909 / CDC SS700).